A 250-amino-acid chain; its full sequence is 5'-nucleotidase SurE (250 aa).

The a divalent metal cation site is built by aspartate 8, aspartate 9, serine 39, and asparagine 91.

Belongs to the SurE nucleotidase family. A divalent metal cation is required as a cofactor.

It localises to the cytoplasm. It catalyses the reaction a ribonucleoside 5'-phosphate + H2O = a ribonucleoside + phosphate. Nucleotidase that shows phosphatase activity on nucleoside 5'-monophosphates. This chain is 5'-nucleotidase SurE, found in Leptospira interrogans serogroup Icterohaemorrhagiae serovar copenhageni (strain Fiocruz L1-130).